Here is a 408-residue protein sequence, read N- to C-terminus: Retron Ec48 reverse transcriptase (408 aa).

The region spanning 43 to 269 is the Reverse transcriptase domain; that stretch reads EELKAIAELP…EPIKVHGLRV (227 aa). Residues aspartate 137, aspartate 216, and aspartate 217 each coordinate Mg(2+).

Belongs to the bacterial reverse transcriptase family.

It catalyses the reaction DNA(n) + a 2'-deoxyribonucleoside 5'-triphosphate = DNA(n+1) + diphosphate. Its function is as follows. Reverse transcriptase (RT) component of antiviral defense system retron Ec48, composed of a non-coding RNA (ncRNA), this reverse transcriptase (RT) and the following membrane protein. Expression of this retron confers protection against bacteriophages lambda, T2, T4, T5 and T7. At multiplicity of infection (MOI) of 0.02 cultures grow normally when infected with lambda without collapsing, at MOI 2 cultures enter growth stasis. At MOI 3 cell membranes are permeabilized within 15 minutes of infection but do not lyse, suggesting the phage are not able to finish a replication cycle. Antiviral defense is suppressed by mutations that knockout the lambda gam expression or phage T7 gp5.9 expression; both viral genes inhibit host RecBCD. The Ec48 retron may sense the integrity of the RecBCD enzyme; when RecBCD is perturbed by viral proteins the Ec48 effector (the membrane protein) is activated, leading to abortive infection and bacterial growth arrest. Responsible for synthesis of msDNA-Ec48 (a branched molecule with RNA linked by a 2',5'-phosphodiester bond to ssDNA). The retron transcript serves as primer (from a conserved internal G residue) and template for the reaction, and codes for the RT. The protein is Retron Ec48 reverse transcriptase of Escherichia coli.